The sequence spans 740 residues: Isocitrate dehydrogenase [NADP] 2 (740 aa).

Positions 83 and 85 each coordinate NADP(+). D-threo-isocitrate-binding residues include Ser-130, Asn-133, Arg-137, Arg-143, and Lys-253. NADP(+) is bound at residue Asn-133. Asp-348 serves as a coordination point for Mg(2+). The D-threo-isocitrate site is built by Tyr-418 and Arg-546. Residues Asp-547 and Asp-551 each coordinate Mg(2+). Residues Ser-584, His-588, Arg-599, Asp-601, and Arg-648 each coordinate NADP(+).

This sequence belongs to the monomeric-type IDH family. As to quaternary structure, monomer. It depends on Mg(2+) as a cofactor. Mn(2+) serves as cofactor.

The catalysed reaction is D-threo-isocitrate + NADP(+) = 2-oxoglutarate + CO2 + NADPH. Its activity is regulated as follows. IDH activity is not significantly affected by monovalent cations. The combined addition of Mn(2+) and another divalent cation results in the decrease of the activity. Its function is as follows. Catalyzes the oxidative decarboxylation of isocitrate to 2-oxoglutarate and carbon dioxide with the concomitant reduction of NADP(+). Cannot use NAD(+). This Psychrobacter sp. (strain 13A) protein is Isocitrate dehydrogenase [NADP] 2.